A 726-amino-acid chain; its full sequence is Catalase-peroxidase (726 aa).

The interval 1–34 (MSMSDDTHNSLSTGKCPFHQGSHDRSAGAGTSSH) is disordered. Residues 105 to 226 (WHGAGTYRSV…LGATEMGLIY (122 aa)) constitute a cross-link (tryptophyl-tyrosyl-methioninium (Trp-Tyr) (with M-252)). Catalysis depends on His106, which acts as the Proton acceptor. The segment at residues 226–252 (YVNPEGPDHSGEPLSAAAAIRATFGNM) is a cross-link (tryptophyl-tyrosyl-methioninium (Tyr-Met) (with W-105)). Residue His267 participates in heme b binding.

Belongs to the peroxidase family. Peroxidase/catalase subfamily. Homodimer or homotetramer. It depends on heme b as a cofactor. Formation of the three residue Trp-Tyr-Met cross-link is important for the catalase, but not the peroxidase activity of the enzyme.

It catalyses the reaction H2O2 + AH2 = A + 2 H2O. It carries out the reaction 2 H2O2 = O2 + 2 H2O. In terms of biological role, bifunctional enzyme with both catalase and broad-spectrum peroxidase activity. The polypeptide is Catalase-peroxidase (Citrobacter koseri (strain ATCC BAA-895 / CDC 4225-83 / SGSC4696)).